We begin with the raw amino-acid sequence, 361 residues long: Aminomethyltransferase (361 aa).

This sequence belongs to the GcvT family. In terms of assembly, the glycine cleavage system is composed of four proteins: P, T, L and H.

It carries out the reaction N(6)-[(R)-S(8)-aminomethyldihydrolipoyl]-L-lysyl-[protein] + (6S)-5,6,7,8-tetrahydrofolate = N(6)-[(R)-dihydrolipoyl]-L-lysyl-[protein] + (6R)-5,10-methylene-5,6,7,8-tetrahydrofolate + NH4(+). Functionally, the glycine cleavage system catalyzes the degradation of glycine. In Phocaeicola vulgatus (strain ATCC 8482 / DSM 1447 / JCM 5826 / CCUG 4940 / NBRC 14291 / NCTC 11154) (Bacteroides vulgatus), this protein is Aminomethyltransferase.